We begin with the raw amino-acid sequence, 368 residues long: Probable ubiquitin receptor RAD23a (368 aa).

Positions 1–77 (MKLTVKTLKG…GFLVVMLSKS (77 aa)) constitute a Ubiquitin-like domain. The span at 80 to 111 (ASSAGPSSTQPTSTTTSTISSTTLAAPSTTQS) shows a compositional bias: low complexity. The segment at 80 to 136 (ASSAGPSSTQPTSTTTSTISSTTLAAPSTTQSIAVPASNSTPVQEQPTAQSDTYGQA) is disordered. A compositionally biased stretch (polar residues) spans 116–136 (ASNSTPVQEQPTAQSDTYGQA). The 44-residue stretch at 142 to 185 (SGSSIEQMVQQIMEMGGGSWDKETVTRALRAAYNNPERAVDYLY) folds into the UBA 1 domain. A disordered region spans residues 202 to 222 (VGSGRELTAPPPSGGPNSSPL). The 44-residue stretch at 239–282 (GTLEFLRGNDQFQQLRSMVNSNPQILQPMLQELGKQNPQLLRLI) folds into the STI1 domain. The UBA 2 domain maps to 320 to 360 (VTPEEQESIERLEAMGFDRAIVIEAFLSCDRNEELAANYLL).

Belongs to the RAD23 family. In terms of assembly, interacts with 'Lys-48'-linked polyubiquitin chains. Interacts with RPN10. In terms of tissue distribution, widely expressed in the whole plant.

It is found in the nucleus. The protein localises to the cytoplasm. May be involved in nucleotide excision repair. Binds and presumably selects ubiquitin-conjugates for destruction. Prefers multiubiquitin chains rather than single ubiquitins, with a binding affinity for 'Lys-48'-linked ubiquitin chains. Acts as a ubiquitin receptor that associates with the 26S proteasomal docking subunit RPN10 for the indirect recognition of ubiquitinated substrates of ubiquitin/26S proteasome-mediated proteolysis (UPP). Involved in UV tolerance in roots, specifically in dark conditions. The protein is Probable ubiquitin receptor RAD23a of Arabidopsis thaliana (Mouse-ear cress).